A 367-amino-acid chain; its full sequence is Peptide chain release factor 2 (367 aa).

An N5-methylglutamine modification is found at glutamine 254.

It belongs to the prokaryotic/mitochondrial release factor family. In terms of processing, methylated by PrmC. Methylation increases the termination efficiency of RF2.

Its subcellular location is the cytoplasm. Peptide chain release factor 2 directs the termination of translation in response to the peptide chain termination codons UGA and UAA. This is Peptide chain release factor 2 from Burkholderia mallei (strain ATCC 23344).